We begin with the raw amino-acid sequence, 778 residues long: MSNTTVTQKRRTLKVAKSSKTLNVSSGVFRPNQSTTKSINPLFSGKSFGSTGDSKVVDKISAQTPKHTAMVVDENGQDVTPHPLYNPDPGVLQSKQGKVFTALDTSLTTMTEFPSIAFQTTNASLTGPFTRSFFGSASASRISQTAESVTDETKDLLVKQDLSNSISDIQSHREEPKEQLRENILDSTANCYLSETETIWLLDIPAVSVSVESEDAEAVKERNNAYTELCKNRQGNDKYVERSMQTFSDASKTKEVQCDSITMVDKAVMCTVWDMYDSFNNISDVSANTVVSSERHEATIPESSSEGHLVHPKRSNQSLSVVSTVSTVSGSSTHIEKMACVLPLDEEPDLQLILQSDKLKQDLALMERVVLANVFQPKLAAYRQLPIIEDPDCVQMVMEEESWTEQSKNSHCPFLERLWDFSCELTMGRNVSCMVWNKKNPDLLAVGYGQVEFKNPNSGLVCCWSLKNPTWPDRVFHCESGVTALDFSASNANQLAVGMYDGTIAIYNVQTSEQTPITDSSDCANLHTSPVWQLTWIDHEDGLAADKGEILVSVSSDGRISKWIHYKSMECVDLMKLKIHDLQWKRHISSLTPGMCFDFHPNDSKIYLVGTEEGHIHKCSSSYNEQYLESYKAHKRPVYKVTWSPFCSDVFLSCSSDWTIQLWRQDLQIPVMGFTSGQRVVFDIMWSPHCATVFGAVSEGKVEIWDLRVSSLDPTLVNWTSPGVNPTALLFSPETDCVLVGDSEGQVTVYKLKNITAGGGSQGETLEDVIQSTLSSQH.

WD repeat units follow at residues 477-517, 526-573, 586-629, 633-673, 676-715, and 721-760; these read HCES…QTPI, LHTS…ECVD, RHIS…QYLE, AHKR…PVMG, SGQR…LDPT, and SPGV…AGGG.

Part of the multisubunit axonemal dynein complex formed at least of two heavy chains and a number of intermediate and light chains.

The protein localises to the cytoplasm. It localises to the cytoskeleton. It is found in the flagellum axoneme. Its subcellular location is the cilium axoneme. The protein resides in the dynein axonemal particle. Functionally, plays a critical role in the assembly of axonemal dynein complex. Plays a key role in ciliary motility. The sequence is that of Dynein axonemal intermediate chain 4 from Danio rerio (Zebrafish).